A 448-amino-acid chain; its full sequence is Signal recognition particle 54 kDa protein (448 aa).

Residues 107-114 (GIQGSGKT), 189-193 (DTAGR), and 247-250 (TKLD) each bind GTP.

The protein belongs to the GTP-binding SRP family. SRP54 subfamily. As to quaternary structure, part of the signal recognition particle protein translocation system, which is composed of SRP and FtsY. Archaeal SRP consists of a 7S RNA molecule of 300 nucleotides and two protein subunits: SRP54 and SRP19.

It is found in the cytoplasm. The enzyme catalyses GTP + H2O = GDP + phosphate + H(+). Functionally, involved in targeting and insertion of nascent membrane proteins into the cytoplasmic membrane. Binds to the hydrophobic signal sequence of the ribosome-nascent chain (RNC) as it emerges from the ribosomes. The SRP-RNC complex is then targeted to the cytoplasmic membrane where it interacts with the SRP receptor FtsY. This is Signal recognition particle 54 kDa protein from Thermococcus gammatolerans (strain DSM 15229 / JCM 11827 / EJ3).